The following is a 308-amino-acid chain: Glycine--tRNA ligase alpha subunit (308 aa).

Belongs to the class-II aminoacyl-tRNA synthetase family. In terms of assembly, tetramer of two alpha and two beta subunits.

The protein resides in the cytoplasm. It carries out the reaction tRNA(Gly) + glycine + ATP = glycyl-tRNA(Gly) + AMP + diphosphate. This Streptococcus pyogenes serotype M3 (strain SSI-1) protein is Glycine--tRNA ligase alpha subunit.